A 1594-amino-acid chain; its full sequence is THO complex subunit 2 (1594 aa).

Residues 1 to 163 form an anchor domain; interaction with THOC5 and THOC7 region; it reads MAAAAVVVPA…KLFYKQQKFN (163 aa). The segment at 164 to 534 is bow domain; interaction with THOC1 dock domain and THOC3; the sequence is LLREENEGYA…GQWKNETYNG (371 aa). Residues 535–686 are MIF4G domain; interaction with THOC3 and DDX39B; that stretch reads HPLLVKVKAQ…LILKEVVQKM (152 aa). The tract at residues 687 to 1174 is stern domain; the sequence is AGIEITEEMT…LAMGYSGQLK (488 aa). A coiled-coil region spans residues 896–965; sequence HTSYEREVNK…LKLEKDNWLL (70 aa). A Nuclear localization signal motif is present at residues 923-928; sequence KKKKEK. Residues 1175 to 1594 are charged domain; that stretch reads SRKSHMIPEN…KHHKSSDKHR (420 aa). 2 stretches are compositionally biased toward basic and acidic residues: residues 1183–1192 and 1218–1234; these read ENEFHHKDPP and KSDESGAEETDKSRERS. A disordered region spans residues 1183-1594; it reads ENEFHHKDPP…KHHKSSDKHR (412 aa). Ser-1222 bears the Phosphoserine mark. The segment covering 1251–1264 has biased composition (low complexity); sequence GNSSNGNSGSNSNK. Composition is skewed to basic and acidic residues over residues 1265 to 1285, 1294 to 1343, and 1353 to 1383; these read AVKENDKEKVKEKEKEKKEKT, ALGK…EKFK, and STQEREREKEPSRERDVAKEMKSKENVKGGE. Thr-1385 carries the post-translational modification Phosphothreonine. Phosphoserine is present on residues Ser-1390, Ser-1393, Ser-1417, Ser-1450, Ser-1486, and Ser-1516. Positions 1416 to 1425 are enriched in polar residues; that stretch reads PSPSHSSTVK. Residues 1449-1504 are compositionally biased toward basic and acidic residues; it reads KSKEREMDKKDLDKSRERSREREKKDEKDRKERKRDHSNNDREVPPDITKRRKEEN. A coiled-coil region spans residues 1464–1491; sequence RERSREREKKDEKDRKERKRDHSNNDRE. Basic and acidic residues predominate over residues 1524 to 1583; sequence NEKDKEKNKSKSSGKEKSSSDSFKSEKMDKISSGGKKESRHDKEKIEKKEKRDSSGGKEE. Basic residues predominate over residues 1584 to 1594; that stretch reads KKHHKSSDKHR.

This sequence belongs to the THOC2 family. Component of the THO subcomplex, which is composed of THOC1, THOC2, THOC3, THOC5, THOC6 and THOC7. The THO subcomplex interacts with DDX39B to form the THO-DDX39B complex which multimerizes into a 28-subunit tetrameric assembly. Component of the transcription/export (TREX) complex at least composed of ALYREF/THOC4, DDX39B, SARNP/CIP29, CHTOP and the THO subcomplex; in the complex interacts with THOC1, THOC3, THOC5, THOC7 and DDX39B. TREX seems to have a dynamic structure involving ATP-dependent remodeling. Interacts with POLDIP3. Interacts with ZC3H11A. Expressed in the hippocampus and the cortical neurons.

It is found in the nucleus. Its subcellular location is the nucleus speckle. The protein localises to the cytoplasm. Functionally, component of the THO subcomplex of the TREX complex which is thought to couple mRNA transcription, processing and nuclear export, and which specifically associates with spliced mRNA and not with unspliced pre-mRNA. Required for efficient export of polyadenylated RNA and spliced mRNA. The THOC1-THOC2-THOC3 core complex alone is sufficient to bind export factor NXF1-NXT1 and promote ATPase activity of DDX39B; in the complex THOC2 is the only component that directly interacts with DDX39B. TREX is recruited to spliced mRNAs by a transcription-independent mechanism, binds to mRNA upstream of the exon-junction complex (EJC) and is recruited in a splicing- and cap-dependent manner to a region near the 5' end of the mRNA where it functions in mRNA export to the cytoplasm via the TAP/NXF1 pathway. Required for NXF1 localization to the nuclear rim. THOC2 (and probably the THO complex) is involved in releasing mRNA from nuclear speckle domains. Plays a role for proper neuronal development. The sequence is that of THO complex subunit 2 (Thoc2) from Mus musculus (Mouse).